The primary structure comprises 191 residues: Small ribosomal subunit protein uS10c (191 aa).

A chloroplast-targeting transit peptide spans 1 to 56 (MAVSTVSSFLLPSFGIPSSSPSSTRLKVSLLPSSSTHGGLSSCVLTKPSVSLTKVF).

This sequence belongs to the universal ribosomal protein uS10 family. Part of the 30S ribosomal subunit.

The protein resides in the plastid. It is found in the chloroplast. This Arabidopsis thaliana (Mouse-ear cress) protein is Small ribosomal subunit protein uS10c (RPS10).